Consider the following 171-residue polypeptide: MERHGVAAPPVELKDQEPPAIVESGEHRQSENHEETPGSVAPSASCQLPGPFSSLDSSIETLKKKAQELIENINESRQKDHALMTNFRDSLKMKVSDLTEKLEERMYQVYSHHSKIIQERLQEFTQKMAKINHLEMELKQVCQTVETVYKDLCVQSEVPTCEEQNYKDGEC.

The disordered stretch occupies residues 1–52 (MERHGVAAPPVELKDQEPPAIVESGEHRQSENHEETPGSVAPSASCQLPGPF). Residues 24–36 (SGEHRQSENHEET) are compositionally biased toward basic and acidic residues. 2 coiled-coil regions span residues 52 to 83 (FSSLDSSIETLKKKAQELIENINESRQKDHAL) and 118 to 146 (QERLQEFTQKMAKINHLEMELKQVCQTVE).

It belongs to the SYCE family. As to quaternary structure, homodimer. Found in a complex with SYCP1 and SYCE1. Interacts with SYCP1 and SYCE1. Interacts with SYCE3. Interacts with TEX12. In terms of tissue distribution, meiotic cells (at protein level). Expressed in the ovary and testis.

Its subcellular location is the nucleus. It is found in the chromosome. Functionally, major component of the transverse central element of synaptonemal complexes (SCS), formed between homologous chromosomes during meiotic prophase. Requires SYCP1 in order to be incorporated into the central element. May have a role in the synaptonemal complex assembly, stabilization and recombination. The chain is Synaptonemal complex central element protein 2 (Syce2) from Mus musculus (Mouse).